A 176-amino-acid chain; its full sequence is Large ribosomal subunit protein uL10 (176 aa).

The protein belongs to the universal ribosomal protein uL10 family. As to quaternary structure, part of the ribosomal stalk of the 50S ribosomal subunit. The N-terminus interacts with L11 and the large rRNA to form the base of the stalk. The C-terminus forms an elongated spine to which L12 dimers bind in a sequential fashion forming a multimeric L10(L12)X complex.

Functionally, forms part of the ribosomal stalk, playing a central role in the interaction of the ribosome with GTP-bound translation factors. This Sorangium cellulosum (strain So ce56) (Polyangium cellulosum (strain So ce56)) protein is Large ribosomal subunit protein uL10.